A 775-amino-acid polypeptide reads, in one-letter code: MRASLLLSVLRPAGPVAVGISLGFTLSLLSVTWVEEPCGPGPPQPGDSELPPRGNTNAARRPNSVQPGAEREKPGAGEGAGENWEPRVLPYHPAQPGQAAKKAVRTRYISTELGIRQRLLVAVLTSQTTLPTLGVAVNRTLGHRLERVVFLTGARGRRAPPGMAVVTLGEERPIGHLHLALRHLLEQHGDDFDWFFLVPDTTYTEAHGLARLTGHLSLASAAHLYLGRPQDFIGGEPTPGRYCHGGFGVLLSRMLLQQLRPHLEGCRNDIVSARPDEWLGRCILDATGVGCTGDHEGVHYSHLELSPGEPVQEGDPHFRSALTAHPVRDPVHMYQLHKAFARAELERTYQEIQELQWEIQNTSHLAVDGDQAAAWPVGIPAPSRPASRFEVLRWDYFTEQHAFSCADGSPRCPLRGADRADVADVLGTALEELNRRYHPALRLQKQQLVNGYRRFDPARGMEYTLDLQLEALTPQGGRRPLTRRVQLLRPLSRVEILPVPYVTEASRLTVLLPLAAAERDLAPGFLEAFATAALEPGDAAAALTLLLLYEPRQAQRVAHADVFAPVKAHVAELERRFPGARVPWLSVQTAAPSPLRLMDLLSKKHPLDTLFLLAGPDTVLTPDFLNRCRMHAISGWQAFFPMHFQAFHPAVAPPQGPGPPELGRDTGRFDRQAASEACFYNSDYVAARGRLAAASEQEEELLESLDVYELFLHFSSLHVLRAVEPALLQRYRAQTCSARLSEDLYHRCLQSVLEGLGSRTQLAMLLFEQEQGNST.

Residues 1 to 15 (MRASLLLSVLRPAGP) are Cytoplasmic-facing. Residues 16–34 (VAVGISLGFTLSLLSVTWV) traverse the membrane as a helical; Signal-anchor for type II membrane protein segment. Topologically, residues 35-775 (EEPCGPGPPQ…LFEQEQGNST (741 aa)) are lumenal. Positions 37–100 (PCGPGPPQPG…YHPAQPGQAA (64 aa)) are disordered. Positions 54–66 (GNTNAARRPNSVQ) are enriched in polar residues. N-linked (GlcNAc...) asparagine glycans are attached at residues Asn-138 and Asn-361. An a divalent metal cation-binding site is contributed by Asp-617.

It belongs to the chondroitin N-acetylgalactosaminyltransferase family. As to quaternary structure, interacts with PRKN. Mn(2+) serves as cofactor. Requires Co(2+) as cofactor. In terms of tissue distribution, ubiquitous. Highly expressed in pancreas, ovary, brain, heart, skeletal muscle, colon, kidney, liver, stomach, spleen and placenta. As to expression, expressed in brain, spleen, ovary, testis, lung and peripheral mononuclear cells. Also ubiquitous.

Its subcellular location is the golgi apparatus. The protein resides in the golgi stack membrane. It localises to the cytoplasm. The protein localises to the cytosol. It is found in the mitochondrion. Its subcellular location is the mitochondrion matrix. The catalysed reaction is 3-O-(beta-D-GlcA-(1-&gt;3)-beta-D-GalNAc-(1-&gt;4)-beta-D-GlcA-(1-&gt;3)-beta-D-Gal-(1-&gt;3)-beta-D-Gal-(1-&gt;4)-beta-D-Xyl)-L-seryl-[protein] + UDP-N-acetyl-alpha-D-galactosamine = 3-O-(beta-D-GalNAc-(1-&gt;4)-beta-D-GlcA-(1-&gt;3)-beta-D-GalNAc-(1-&gt;4)-beta-D-GlcA-(1-&gt;3)-beta-D-Gal-(1-&gt;3)-beta-D-Gal-(1-&gt;4)-beta-D-Xyl)-L-seryl-[protein] + UDP + H(+). It catalyses the reaction 3-O-{beta-D-GlcA-(1-&gt;3)-[beta-D-GalNAc-(1-&gt;4)-beta-D-GlcA-(1-&gt;3)](n)-beta-D-GalNAc-(1-&gt;4)-beta-D-GlcA-(1-&gt;3)-beta-D-Gal-(1-&gt;3)-beta-D-Gal-(1-&gt;4)-beta-D-Xyl}-L-seryl-[protein] + UDP-N-acetyl-alpha-D-galactosamine = 3-O-{[beta-D-GalNAc-(1-&gt;4)-beta-D-GlcA-(1-&gt;3)](n+1)-beta-D-GalNAc-(1-&gt;4)-beta-D-GlcA-(1-&gt;3)-beta-D-Gal-(1-&gt;3)-beta-D-Gal-(1-&gt;4)-beta-D-Xyl}-L-seryl-[protein] + UDP + H(+). The enzyme catalyses 3-O-(beta-D-GalNAc-(1-&gt;4)-beta-D-GlcA-(1-&gt;3)-beta-D-Gal-(1-&gt;3)-beta-D-Gal-(1-&gt;4)-beta-D-Xyl)-L-seryl-[protein] + UDP-alpha-D-glucuronate = 3-O-(beta-D-GlcA-(1-&gt;3)-beta-D-GalNAc-(1-&gt;4)-beta-D-GlcA-(1-&gt;3)-beta-D-Gal-(1-&gt;3)-beta-D-Gal-(1-&gt;4)-beta-D-Xyl)-L-seryl-[protein] + UDP + H(+). It carries out the reaction 3-O-{[beta-D-GalNAc-(1-&gt;4)-beta-D-GlcA-(1-&gt;3)](n)-beta-D-GalNAc-(1-&gt;4)-beta-D-GlcA-(1-&gt;3)-beta-D-Gal-(1-&gt;3)-beta-D-Gal-(1-&gt;4)-beta-D-Xyl}-L-seryl-[protein] + UDP-alpha-D-glucuronate = 3-O-{beta-D-GlcA-(1-&gt;3)-[beta-D-GalNAc-(1-&gt;4)-beta-D-GlcA-(1-&gt;3)](n)-beta-D-GalNAc-(1-&gt;4)-beta-D-GlcA-(1-&gt;3)-beta-D-Gal-(1-&gt;3)-beta-D-Gal-(1-&gt;4)-beta-D-Xyl}-L-seryl-[protein] + UDP + H(+). Has both beta-1,3-glucuronic acid and beta-1,4-N-acetylgalactosamine transferase activity. Transfers glucuronic acid (GlcUA) from UDP-GlcUA and N-acetylgalactosamine (GalNAc) from UDP-GalNAc to the non-reducing end of the elongating chondroitin polymer. Seems to act as a specific activating factor for CHSY1 in chondroitin polymerization. Functionally, may facilitate PRKN transport into the mitochondria. In collaboration with PRKN, may enhance cell viability and protect cells from oxidative stress. The chain is Chondroitin sulfate synthase 2 from Homo sapiens (Human).